A 586-amino-acid polypeptide reads, in one-letter code: Glutamine--tRNA ligase (586 aa).

The 'HIGH' region signature appears at 58-68 (PEPNGYLHIGH). ATP is bound by residues 59-61 (EPN) and 65-71 (HIGHAKS). 2 residues coordinate L-glutamine: D91 and Y240. Residues T259 and 294–295 (RL) contribute to the ATP site. The 'KMSKS' region motif lies at 301 to 305 (VTSKR).

Belongs to the class-I aminoacyl-tRNA synthetase family. Monomer.

It is found in the cytoplasm. It carries out the reaction tRNA(Gln) + L-glutamine + ATP = L-glutaminyl-tRNA(Gln) + AMP + diphosphate. This Bordetella avium (strain 197N) protein is Glutamine--tRNA ligase.